Consider the following 345-residue polypeptide: NADH-quinone oxidoreductase subunit H (345 aa).

8 helical membrane passes run 13 to 33, 84 to 104, 115 to 135, 161 to 181, 190 to 210, 248 to 268, 278 to 298, and 309 to 329; these read VLII…LLFL, FMLA…VIPF, VAIL…IMGG, IGLI…SAIV, FFSW…ISAL, YIAI…GWLS, IWMV…KAIV, and LGWK…AFAA.

This sequence belongs to the complex I subunit 1 family. In terms of assembly, NDH-1 is composed of 14 different subunits. Subunits NuoA, H, J, K, L, M, N constitute the membrane sector of the complex.

It localises to the cell inner membrane. The catalysed reaction is a quinone + NADH + 5 H(+)(in) = a quinol + NAD(+) + 4 H(+)(out). In terms of biological role, NDH-1 shuttles electrons from NADH, via FMN and iron-sulfur (Fe-S) centers, to quinones in the respiratory chain. The immediate electron acceptor for the enzyme in this species is believed to be ubiquinone. Couples the redox reaction to proton translocation (for every two electrons transferred, four hydrogen ions are translocated across the cytoplasmic membrane), and thus conserves the redox energy in a proton gradient. This subunit may bind ubiquinone. In Dinoroseobacter shibae (strain DSM 16493 / NCIMB 14021 / DFL 12), this protein is NADH-quinone oxidoreductase subunit H.